A 379-amino-acid chain; its full sequence is Cytochrome b (379 aa).

4 helical membrane-spanning segments follow: residues 33–53 (FGSLLGMCLMIQILTGLFLAM), 77–98 (WLIRYLHANGASMFFICLFIHV), 113–133 (WNIGIILFLMTMATAFVGYVL), and 178–198 (FFAFHFILPFIIAAFALVHLL). Heme b contacts are provided by His83 and His97. Positions 182 and 196 each coordinate heme b. A ubiquinone is bound at residue His201. A run of 4 helical transmembrane segments spans residues 226 to 246 (TKDLLGIFLLLLVLMILALFF), 288 to 308 (LGGVLALILSILILAAFPLLN), 320 to 340 (VTQVIYWIFTANLLVLTWIGG), and 347 to 367 (FTMIGQIASITYLAIIIILMP).

It belongs to the cytochrome b family. The cytochrome bc1 complex contains 11 subunits: 3 respiratory subunits (MT-CYB, CYC1 and UQCRFS1), 2 core proteins (UQCRC1 and UQCRC2) and 6 low-molecular weight proteins (UQCRH/QCR6, UQCRB/QCR7, UQCRQ/QCR8, UQCR10/QCR9, UQCR11/QCR10 and a cleavage product of UQCRFS1). This cytochrome bc1 complex then forms a dimer. Requires heme b as cofactor.

It localises to the mitochondrion inner membrane. In terms of biological role, component of the ubiquinol-cytochrome c reductase complex (complex III or cytochrome b-c1 complex) that is part of the mitochondrial respiratory chain. The b-c1 complex mediates electron transfer from ubiquinol to cytochrome c. Contributes to the generation of a proton gradient across the mitochondrial membrane that is then used for ATP synthesis. This Akodon kofordi (Koford's grass mouse) protein is Cytochrome b (MT-CYB).